A 382-amino-acid polypeptide reads, in one-letter code: Chaperone protein DnaJ (382 aa).

Residues 5 to 70 (DYYEVLGLQK…QKRAAYDQYG (66 aa)) form the J domain. Residues 134-212 (GTTKDIQINT…CHGEGRVHKK (79 aa)) form a CR-type zinc finger. The Zn(2+) site is built by Cys-147, Cys-150, Cys-164, Cys-167, Cys-186, Cys-189, Cys-200, and Cys-203. CXXCXGXG motif repeat units lie at residues 147-154 (CDSCGGSG), 164-171 (CPHCHGSG), 186-193 (CPTCHGSG), and 200-207 (CRNCHGEG).

It belongs to the DnaJ family. As to quaternary structure, homodimer. Zn(2+) is required as a cofactor.

Its subcellular location is the cytoplasm. Participates actively in the response to hyperosmotic and heat shock by preventing the aggregation of stress-denatured proteins and by disaggregating proteins, also in an autonomous, DnaK-independent fashion. Unfolded proteins bind initially to DnaJ; upon interaction with the DnaJ-bound protein, DnaK hydrolyzes its bound ATP, resulting in the formation of a stable complex. GrpE releases ADP from DnaK; ATP binding to DnaK triggers the release of the substrate protein, thus completing the reaction cycle. Several rounds of ATP-dependent interactions between DnaJ, DnaK and GrpE are required for fully efficient folding. Also involved, together with DnaK and GrpE, in the DNA replication of plasmids through activation of initiation proteins. This is Chaperone protein DnaJ from Haemophilus influenzae (strain ATCC 51907 / DSM 11121 / KW20 / Rd).